The primary structure comprises 383 residues: Dimethylsulfoniopropionate lyase 6 (383 aa).

Belongs to the aspartate/glutamate racemases family. ALMA1 subfamily. In terms of assembly, homotetramer.

It catalyses the reaction S,S-dimethyl-beta-propiothetin = acrylate + dimethyl sulfide + H(+). Mediates cleavage of dimethylsulfoniopropionate (DMSP) into dimethyl sulfide (DMS) and acrylate. DMS is the principal form by which sulfur is transported from oceans to the atmosphere and is a key component of the ocean sulfur cycle. The sequence is that of Dimethylsulfoniopropionate lyase 6 from Emiliania huxleyi (strain CCMP1516).